The sequence spans 488 residues: Cobyric acid synthase (488 aa).

The GATase cobBQ-type domain maps to 250–438 (DITIAIIRLP…LHGIFDNGSW (189 aa)). Cysteine 331 serves as the catalytic Nucleophile. Histidine 430 is a catalytic residue.

Belongs to the CobB/CobQ family. CobQ subfamily.

The protein operates within cofactor biosynthesis; adenosylcobalamin biosynthesis. Its function is as follows. Catalyzes amidations at positions B, D, E, and G on adenosylcobyrinic A,C-diamide. NH(2) groups are provided by glutamine, and one molecule of ATP is hydrogenolyzed for each amidation. The protein is Cobyric acid synthase of Trichodesmium erythraeum (strain IMS101).